The chain runs to 501 residues: Cytochrome P450 2J1 (501 aa).

Residue Cys-447 participates in heme binding.

Belongs to the cytochrome P450 family. Heme is required as a cofactor. As to expression, small intestine.

It is found in the endoplasmic reticulum membrane. The protein localises to the microsome membrane. It catalyses the reaction an organic molecule + reduced [NADPH--hemoprotein reductase] + O2 = an alcohol + oxidized [NADPH--hemoprotein reductase] + H2O + H(+). In terms of biological role, catalyzes the N-demethylation of benzphetamine to formaldehyde. The polypeptide is Cytochrome P450 2J1 (CYP2J1) (Oryctolagus cuniculus (Rabbit)).